A 469-amino-acid polypeptide reads, in one-letter code: MTKNKKPTHFDAIIIGSGPGGEGAAMGLTKAGLNVAVIERENSVGGGCTHWGTIPSKALRHAVSRIIEYNQNPLYCKNNSSLHSTFSQILGHAQDVVNKQTRMRQGFYDRNKCSLIFGEASFIDAHTVRVKNADNSTDLYSADKFVIATGSRPYHPEGVDFDHSRVYDSDSILQLEHDPRHIIIYGAGVIGSEYASIFRGLGVKVDLINTRHRLLEFLDNEISDSLSYHLWNSGAMIRNGETFEKIEGTDDSIILHLESGKKMRADCLLYANGRTGNTDKLNLNKVGLTPDSRGQLAVNQNYCTDVDHVYAVGDVIGYPSLASAAYDQGRFVAQAITTGEAQGSLIDHIPTGIYTIPEISSVGKTEQQLTADKVPYEVGRSQFKHLARAQIAGTEVGSLKILFHRETKEILGIHCFGERAAEIIHIGQAIMEQKGDGNTIDYFVNTTFNYPTMAEAYRVAALNGLNRLF.

Residue 39 to 48 (ERENSVGGGC) participates in FAD binding.

Belongs to the class-I pyridine nucleotide-disulfide oxidoreductase family. Requires FAD as cofactor.

It localises to the cytoplasm. It catalyses the reaction NAD(+) + NADPH = NADH + NADP(+). Functionally, conversion of NADPH, generated by peripheral catabolic pathways, to NADH, which can enter the respiratory chain for energy generation. This is Soluble pyridine nucleotide transhydrogenase from Photobacterium profundum (strain SS9).